We begin with the raw amino-acid sequence, 486 residues long: MSLEDSLRSLSLDYLNLLINGQAFSDVTFSVEGRLVHAHRCILAARSLFFRKFFCGGSDPSASSGLIDQTGVRVNPSGSPRSSNGVLVIPVNSVGYEVFLLLLQFLYSGQVSIVPQKHEARPNCGERGCWHTHCSSAVDLALDTLAAARYFGVEQLALLTQKQLASMVEKASIEDVMKVLLASRKQDMQQLWTTCSHLVAKSGLPPEVLAKHLPIEIVAKIEELRLKSSIARRSMMPHHHHHHHPHDLNAAADLEDQKIRRMRRALDSSDVELVKLMVMGEGLNLDEALALHYAVENCSREVAKALLELGAADVNYPAGPAGKTPLHIAAEMVSPDMVAVLLDHHADPNVRTVDNVTPLDILRTLTSDFLFKGAIPGLTHIEPNKLRLCLELVQSAALVLSREEGNANNNPPSSTTTTLPMYHHPMNDDHNSSSSSGNNHNIGNLNLDSRLVYLNLGATVGSGQMSDDHGGRHGDPAMYHHSHHDY.

Positions 25–115 constitute a BTB domain; the sequence is SDVTFSVEGR…LYSGQVSIVP (91 aa). The C2HC NPR-type zinc finger occupies 121-135; the sequence is RPNCGERGCWHTHCS. Positions 124, 129, 131, and 134 each coordinate Zn(2+). ANK repeat units lie at residues 257-286, 287-316, 321-350, and 354-388; these read QKIRRMRRALDSSDVELVKLMVMGEGLNLD, EALALHYAVENCSREVAKALLELGAADVNY, AGKTPLHIAAEMVSPDMVAVLLDHHADPNV, and DNVTPLDILRTLTSDFLFKGAIPGLTHIEPNKLRL. 2 disordered regions span residues 403–442 and 464–486; these read EEGNANNNPPSSTTTTLPMYHHPMNDDHNSSSSSGNNHNI and QMSDDHGGRHGDPAMYHHSHHDY. Low complexity-rich tracts occupy residues 406-418 and 432-442; these read NANNNPPSSTTTT and SSSSSGNNHNI. Residues 466-475 show a composition bias toward basic and acidic residues; sequence SDDHGGRHGD.

Belongs to the plant 'ANKYRIN-BTB/POZ' family. 'NOOT-BOP-COCH-like' (NBCL) subfamily. As to quaternary structure, homodimer. In terms of tissue distribution, expressed in xylem vessels and parenchyma cells of pedicel vascular tissue in the abscission zone (AZ). Accumulates in developing root nodules and present in roots, especially in the upper part.

The protein localises to the nucleus. It localises to the cytoplasm. It is found in the cell membrane. It participates in protein modification; protein ubiquitination. May act as a substrate-specific adapter of an E3 ubiquitin-protein ligase complex (CUL3-RBX1-BTB) which mediates the ubiquitination and subsequent proteasomal degradation of target proteins. Transcriptional co-regulator involved in promoting the fate and determination of leaf and flower meristems. Required for the abscission of senescent organs, probably by regulating the cell wall disorganization in abscission zones (AZs, e.g. pulvini at the base of leaves). Involved in the coordination of the symbiotic nodule developmental program; promotes the formation of root nodules by interacting directly with APP1 to modulate the expression of the nuclear transcription factor Y subunit (NF-YA1), a key nodulin. Necessary for the robust maintenance of nodule identity throughout the nodule developmental program. In Lupinus luteus (European yellow lupine), this protein is BTB/POZ domain and ankyrin repeat-containing protein BOP.